The sequence spans 264 residues: Thiazole synthase (264 aa).

Lysine 106 (schiff-base intermediate with DXP) is an active-site residue. 1-deoxy-D-xylulose 5-phosphate-binding positions include glycine 167, 193–194 (AG), and 215–216 (NS).

This sequence belongs to the ThiG family. Homotetramer. Forms heterodimers with either ThiH or ThiS.

It is found in the cytoplasm. It carries out the reaction [ThiS sulfur-carrier protein]-C-terminal-Gly-aminoethanethioate + 2-iminoacetate + 1-deoxy-D-xylulose 5-phosphate = [ThiS sulfur-carrier protein]-C-terminal Gly-Gly + 2-[(2R,5Z)-2-carboxy-4-methylthiazol-5(2H)-ylidene]ethyl phosphate + 2 H2O + H(+). It functions in the pathway cofactor biosynthesis; thiamine diphosphate biosynthesis. Functionally, catalyzes the rearrangement of 1-deoxy-D-xylulose 5-phosphate (DXP) to produce the thiazole phosphate moiety of thiamine. Sulfur is provided by the thiocarboxylate moiety of the carrier protein ThiS. In vitro, sulfur can be provided by H(2)S. This chain is Thiazole synthase, found in Pseudomonas savastanoi pv. phaseolicola (strain 1448A / Race 6) (Pseudomonas syringae pv. phaseolicola (strain 1448A / Race 6)).